The chain runs to 468 residues: Ribosomal lysine N-methyltransferase 4 (468 aa).

The SET domain occupies 22 to 302; it reads EKIGLNDYRH…KGEQLWNTYG (281 aa). A disordered region spans residues 188–225; the sequence is ISNENEKSAAETSIKEDKNGDAAKKNEGSANQDDEKLH. An S-adenosyl-L-methionine-binding site is contributed by Y301.

It belongs to the class V-like SAM-binding methyltransferase superfamily. Histone-lysine methyltransferase family. SETD6 subfamily.

Its subcellular location is the nucleus. Functionally, S-adenosyl-L-methionine-dependent protein-lysine N-methyltransferase that monomethylates 60S ribosomal protein L42 (rpl42) at 'Lys-55'. The polypeptide is Ribosomal lysine N-methyltransferase 4 (Schizosaccharomyces pombe (strain 972 / ATCC 24843) (Fission yeast)).